We begin with the raw amino-acid sequence, 423 residues long: Glucose-1-phosphate adenylyltransferase (423 aa).

Residues tyrosine 107, glycine 172, 187–188 (EK), and serine 205 contribute to the alpha-D-glucose 1-phosphate site.

Belongs to the bacterial/plant glucose-1-phosphate adenylyltransferase family. In terms of assembly, homotetramer.

The catalysed reaction is alpha-D-glucose 1-phosphate + ATP + H(+) = ADP-alpha-D-glucose + diphosphate. It participates in glycan biosynthesis; glycogen biosynthesis. In terms of biological role, involved in the biosynthesis of ADP-glucose, a building block required for the elongation reactions to produce glycogen. Catalyzes the reaction between ATP and alpha-D-glucose 1-phosphate (G1P) to produce pyrophosphate and ADP-Glc. The chain is Glucose-1-phosphate adenylyltransferase from Albidiferax ferrireducens (strain ATCC BAA-621 / DSM 15236 / T118) (Rhodoferax ferrireducens).